Reading from the N-terminus, the 87-residue chain is UPF0248 protein TSIB_1445 (87 aa).

This sequence belongs to the UPF0248 family.

This Thermococcus sibiricus (strain DSM 12597 / MM 739) protein is UPF0248 protein TSIB_1445.